A 206-amino-acid chain; its full sequence is Platelet glycoprotein Ib beta chain (206 aa).

The N-terminal stretch at 1–26 (MGSRPRGALSLLLLLLAPPSRPASGC) is a signal peptide. Intrachain disulfides connect Cys26/Cys32 and Cys30/Cys39. The LRRNT domain maps to 27–55 (PAPCRCSETRVDCGRRGLTWASLPAAFPP). Residues 27–150 (PAPCRCSETR…CAPGLLCWGA (124 aa)) lie on the Extracellular side of the membrane. One copy of the LRR repeat lies at 60 to 83 (LVLTDNNLTALPPGLLDTLPALRR). Positions 89 to 143 (NPWRCDCRLLPLRAWLAGRPEREFYRDLRCVAPLALRGRLLPYVAEDELRAACAP) constitute an LRRCT domain. 2 disulfide bridges follow: Cys93/Cys118 and Cys95/Cys141. The helical transmembrane segment at 151-171 (LVAQLALLVLGLLHALLLALL) threads the bilayer. Residues 172–206 (LSRLRRLRAQARARSTREFSLTAPLVAESAGGGAS) lie on the Cytoplasmic side of the membrane. A Phosphoserine modification is found at Ser186. The residue at position 191 (Ser191) is a Phosphoserine; by PKA. Thr193 carries the post-translational modification Phosphothreonine. Ser200 is subject to Phosphoserine.

As to quaternary structure, two GP-Ib beta are disulfide-linked to one GP-Ib alpha. GP-IX is complexed with the GP-Ib heterodimer via a non covalent linkage. Interacts with TRAF4.

The protein resides in the membrane. Gp-Ib, a surface membrane protein of platelets, participates in the formation of platelet plugs by binding to von Willebrand factor, which is already bound to the subendothelium. This Rattus norvegicus (Rat) protein is Platelet glycoprotein Ib beta chain (Gp1bb).